Reading from the N-terminus, the 358-residue chain is Phosphoserine aminotransferase (358 aa).

Residue R41 participates in L-glutamate binding. Residues 75-76, W100, T148, D167, and Q190 each bind pyridoxal 5'-phosphate; that span reads AS. K191 is modified (N6-(pyridoxal phosphate)lysine). 233–234 provides a ligand contact to pyridoxal 5'-phosphate; it reads NT.

The protein belongs to the class-V pyridoxal-phosphate-dependent aminotransferase family. SerC subfamily. In terms of assembly, homodimer. It depends on pyridoxal 5'-phosphate as a cofactor.

Its subcellular location is the cytoplasm. It catalyses the reaction O-phospho-L-serine + 2-oxoglutarate = 3-phosphooxypyruvate + L-glutamate. The enzyme catalyses 4-(phosphooxy)-L-threonine + 2-oxoglutarate = (R)-3-hydroxy-2-oxo-4-phosphooxybutanoate + L-glutamate. Its pathway is amino-acid biosynthesis; L-serine biosynthesis; L-serine from 3-phospho-D-glycerate: step 2/3. It participates in cofactor biosynthesis; pyridoxine 5'-phosphate biosynthesis; pyridoxine 5'-phosphate from D-erythrose 4-phosphate: step 3/5. In terms of biological role, catalyzes the reversible conversion of 3-phosphohydroxypyruvate to phosphoserine and of 3-hydroxy-2-oxo-4-phosphonooxybutanoate to phosphohydroxythreonine. The polypeptide is Phosphoserine aminotransferase (Campylobacter jejuni (strain RM1221)).